Reading from the N-terminus, the 397-residue chain is Putative 3'(2'),5'-bisphosphate nucleotidase, mitochondrial (397 aa).

The N-terminal 16 residues, 1–16 (MYILDTGARFSAVRFS), are a transit peptide targeting the mitochondrion. Catalysis depends on Asp-91, which acts as the Proton acceptor. Residues Glu-114, Asp-174, Ile-176, and Asp-177 each contribute to the Mg(2+) site. Catalysis depends on Thr-179, which acts as the Proton acceptor. Residues Thr-179, Ser-305, Lys-308, and Asp-334 each coordinate adenosine 3',5'-bisphosphate. Ser-305, Lys-308, and Asp-334 together coordinate AMP. Asp-334 is a binding site for Mg(2+).

It belongs to the inositol monophosphatase superfamily. Mg(2+) serves as cofactor.

It localises to the mitochondrion. It catalyses the reaction 3'-phosphoadenylyl sulfate + H2O = adenosine 5'-phosphosulfate + phosphate. It carries out the reaction adenosine 3',5'-bisphosphate + H2O = AMP + phosphate. The enzyme catalyses adenosine 2',5'-bisphosphate + H2O = AMP + phosphate. Its function is as follows. Phosphatase that converts adenosine 3'-phosphate 5'-phosphosulfate (PAPS) to adenosine 5'-phosphosulfate (APS) and 3'(2')-phosphoadenosine 5'-phosphate (PAP) to AMP. The sequence is that of Putative 3'(2'),5'-bisphosphate nucleotidase, mitochondrial from Arabidopsis thaliana (Mouse-ear cress).